The chain runs to 88 residues: Small ribosomal subunit protein uS15 (88 aa).

This sequence belongs to the universal ribosomal protein uS15 family. Part of the 30S ribosomal subunit. Forms a bridge to the 50S subunit in the 70S ribosome, contacting the 23S rRNA.

Functionally, one of the primary rRNA binding proteins, it binds directly to 16S rRNA where it helps nucleate assembly of the platform of the 30S subunit by binding and bridging several RNA helices of the 16S rRNA. Its function is as follows. Forms an intersubunit bridge (bridge B4) with the 23S rRNA of the 50S subunit in the ribosome. This Mycoplasmopsis synoviae (strain 53) (Mycoplasma synoviae) protein is Small ribosomal subunit protein uS15.